Here is a 547-residue protein sequence, read N- to C-terminus: Delta-guaiene synthase 1 (547 aa).

Residues D299, D303, and D444 each coordinate Mg(2+). The short motif at 299 to 303 is the DDXXD motif element; it reads DDTYD.

This sequence belongs to the terpene synthase family. It depends on Mg(2+) as a cofactor.

It catalyses the reaction (2E,6E)-farnesyl diphosphate = delta-guaiene + diphosphate. It carries out the reaction (2E,6E)-farnesyl diphosphate = alpha-guaiene + diphosphate. It participates in secondary metabolite biosynthesis; terpenoid biosynthesis. Functionally, sesquiterpene synthase involved in the biosynthesis of delta-guaiene (81.2%) and alpha-guaiene (18.1%), two structures composed of five- and seven-membered rings. Also produces 0.7% of alpha-humulene. This is Delta-guaiene synthase 1 (C2) from Aquilaria crassna (Eagle wood).